The sequence spans 1578 residues: Pentafunctional AROM polypeptide (1578 aa).

Residues 1-384 (MTGPTKISIL…YEPRASVVPN (384 aa)) are 3-dehydroquinate synthase. NAD(+) is bound by residues 44–46 (DTN), 81–84 (EVSK), 114–116 (GGV), and aspartate 119. Arginine 130 contributes to the 7-phospho-2-dehydro-3-deoxy-D-arabino-heptonate binding site. 139–140 (TT) lines the NAD(+) pocket. Residues aspartate 146 and lysine 152 each contribute to the 7-phospho-2-dehydro-3-deoxy-D-arabino-heptonate site. Residue lysine 161 participates in NAD(+) binding. Asparagine 162 contacts 7-phospho-2-dehydro-3-deoxy-D-arabino-heptonate. NAD(+) is bound by residues 179–182 (FLET) and asparagine 190. Zn(2+) is bound at residue glutamate 194. 7-phospho-2-dehydro-3-deoxy-D-arabino-heptonate-binding positions include 194-197 (EVIK) and lysine 250. The active-site Proton acceptor; for 3-dehydroquinate synthase activity is glutamate 260. 7-phospho-2-dehydro-3-deoxy-D-arabino-heptonate contacts are provided by residues 264–268 (RNLLN) and histidine 271. Histidine 271 lines the Zn(2+) pocket. The Proton acceptor; for 3-dehydroquinate synthase activity role is filled by histidine 275. 2 residues coordinate 7-phospho-2-dehydro-3-deoxy-D-arabino-heptonate: histidine 287 and lysine 356. Residue histidine 287 participates in Zn(2+) binding. The segment at 397-842 (VYPGVSPASE…WDTLRQKFAV (446 aa)) is EPSP synthase. The active-site For EPSP synthase activity is the cysteine 824. A shikimate kinase region spans residues 864–1055 (SASVFIIGMR…KKKQHSFFVS (192 aa)). 871-878 (GMRGAGKT) contacts ATP. Residues 1056–1276 (LTLPDVRGAD…AAPGQLSATD (221 aa)) form a 3-dehydroquinase region. The active-site Proton acceptor; for 3-dehydroquinate dehydratase activity is the histidine 1179. Lysine 1207 serves as the catalytic Schiff-base intermediate with substrate; for 3-dehydroquinate dehydratase activity. The segment at 1289 to 1578 (KKRFALFGSP…YERARAIVLG (290 aa)) is shikimate dehydrogenase.

The protein in the N-terminal section; belongs to the sugar phosphate cyclases superfamily. Dehydroquinate synthase family. This sequence in the 2nd section; belongs to the EPSP synthase family. It in the 3rd section; belongs to the shikimate kinase family. In the 4th section; belongs to the type-I 3-dehydroquinase family. The protein in the C-terminal section; belongs to the shikimate dehydrogenase family. In terms of assembly, homodimer. Zn(2+) is required as a cofactor.

It localises to the cytoplasm. The catalysed reaction is 7-phospho-2-dehydro-3-deoxy-D-arabino-heptonate = 3-dehydroquinate + phosphate. It carries out the reaction 3-dehydroquinate = 3-dehydroshikimate + H2O. The enzyme catalyses shikimate + NADP(+) = 3-dehydroshikimate + NADPH + H(+). It catalyses the reaction shikimate + ATP = 3-phosphoshikimate + ADP + H(+). The catalysed reaction is 3-phosphoshikimate + phosphoenolpyruvate = 5-O-(1-carboxyvinyl)-3-phosphoshikimate + phosphate. It participates in metabolic intermediate biosynthesis; chorismate biosynthesis; chorismate from D-erythrose 4-phosphate and phosphoenolpyruvate: step 2/7. The protein operates within metabolic intermediate biosynthesis; chorismate biosynthesis; chorismate from D-erythrose 4-phosphate and phosphoenolpyruvate: step 3/7. It functions in the pathway metabolic intermediate biosynthesis; chorismate biosynthesis; chorismate from D-erythrose 4-phosphate and phosphoenolpyruvate: step 4/7. Its pathway is metabolic intermediate biosynthesis; chorismate biosynthesis; chorismate from D-erythrose 4-phosphate and phosphoenolpyruvate: step 5/7. It participates in metabolic intermediate biosynthesis; chorismate biosynthesis; chorismate from D-erythrose 4-phosphate and phosphoenolpyruvate: step 6/7. Its function is as follows. The AROM polypeptide catalyzes 5 consecutive enzymatic reactions in prechorismate polyaromatic amino acid biosynthesis. This Neosartorya fischeri (strain ATCC 1020 / DSM 3700 / CBS 544.65 / FGSC A1164 / JCM 1740 / NRRL 181 / WB 181) (Aspergillus fischerianus) protein is Pentafunctional AROM polypeptide.